A 947-amino-acid chain; its full sequence is Translation initiation factor IF-2 (947 aa).

The tract at residues 69-353 (RRRKEVPQEE…TPKPQKKTEV (285 aa)) is disordered. A compositionally biased stretch (low complexity) spans 81-108 (APPAAAEEPSSVDTAVAEEAPAEEVQPV). A compositionally biased stretch (acidic residues) spans 139–155 (PVVEEVIAEPAVEEVVE). 2 stretches are compositionally biased toward basic and acidic residues: residues 215 to 226 (VTKEKPKVEKAT) and 246 to 262 (KRQE…ERPK). The span at 264–284 (AKPSGGPAPRAKEAAPQAAVP) shows a compositional bias: low complexity. The segment covering 327-337 (QVYEPERDERR) has biased composition (basic and acidic residues). Basic residues predominate over residues 338 to 348 (MRRGKKTPKPQ). Residues 447 to 616 (PRPPVVTIMG…LLQAEVLELK (170 aa)) form the tr-type G domain. Residues 456-463 (GHVDHGKT) are G1. Residue 456–463 (GHVDHGKT) participates in GTP binding. Residues 481–485 (GITQH) form a G2 region. Residues 502–505 (DTPG) are G3. Residues 502 to 506 (DTPGH) and 556 to 559 (NKMD) each bind GTP. The interval 556–559 (NKMD) is G4. Positions 592 to 594 (SAK) are G5.

This sequence belongs to the TRAFAC class translation factor GTPase superfamily. Classic translation factor GTPase family. IF-2 subfamily.

Its subcellular location is the cytoplasm. Its function is as follows. One of the essential components for the initiation of protein synthesis. Protects formylmethionyl-tRNA from spontaneous hydrolysis and promotes its binding to the 30S ribosomal subunits. Also involved in the hydrolysis of GTP during the formation of the 70S ribosomal complex. The protein is Translation initiation factor IF-2 of Syntrophotalea carbinolica (strain DSM 2380 / NBRC 103641 / GraBd1) (Pelobacter carbinolicus).